We begin with the raw amino-acid sequence, 207 residues long: Sodium/potassium-transporting ATPase subunit beta-1-interacting protein 1 (207 aa).

The first 21 residues, 1–21, serve as a signal peptide directing secretion; it reads MGKCSGRCTLVAFCCLQLVAA. At 22–34 the chain is on the extracellular side; sequence LERQIFDFLGYQW. A helical transmembrane segment spans residues 35 to 55; it reads APILANFLHIMAVILGIFGTV. At 56 to 61 the chain is on the cytoplasmic side; it reads QYRSRY. The helical transmembrane segment at 62 to 82 threads the bilayer; it reads LILYAAWLVLWVGWNAFIICF. Residues 83–146 are Extracellular-facing; the sequence is YLEVGQLSQD…GCLLDYPYIE (64 aa). The N-linked (GlcNAc...) asparagine glycan is linked to Asn100. Residues 147–167 traverse the membrane as a helical segment; sequence ALSSALQIFLALFGFVFACYV. At 168–207 the chain is on the cytoplasmic side; it reads SKVFLEEEDSFDFIGGFDSYGYQAPQKTSHLQLQPLYTSG.

This sequence belongs to the NKAIN family. In terms of assembly, interacts with ATP1B1 C-terminus.

Its subcellular location is the cell membrane. In Homo sapiens (Human), this protein is Sodium/potassium-transporting ATPase subunit beta-1-interacting protein 1 (NKAIN1).